The primary structure comprises 362 residues: uncharacterized protein (362 aa).

Residues V13–F33 traverse the membrane as a helical segment. Positions E314–L357 constitute a LysM domain.

It belongs to the chlamydial CPn_0593/CT_474/TC_0759 family.

It is found in the membrane. This is an uncharacterized protein from Chlamydia pneumoniae (Chlamydophila pneumoniae).